The sequence spans 85 residues: Probable Thioredoxin (85 aa).

Residues 2–85 (VVNIEVFTSP…LFEAINDEME (84 aa)) enclose the Glutaredoxin domain. The cysteines at positions 13 and 16 are disulfide-linked.

Belongs to the glutaredoxin family.

It localises to the cytoplasm. Functionally, acts to maintain redox homeostasis; functions as a protein disulfide reductase. In Methanothermobacter thermautotrophicus (strain ATCC 29096 / DSM 1053 / JCM 10044 / NBRC 100330 / Delta H) (Methanobacterium thermoautotrophicum), this protein is Probable Thioredoxin.